Consider the following 344-residue polypeptide: Methionine import ATP-binding protein MetN (344 aa).

The ABC transporter domain maps to 2–241 (IELQGLSQRF…PQHEVTRAMI (240 aa)). 38-45 (GRSGAGKS) lines the ATP pocket.

Belongs to the ABC transporter superfamily. Methionine importer (TC 3.A.1.24) family. The complex is composed of two ATP-binding proteins (MetN), two transmembrane proteins (MetI) and a solute-binding protein (MetQ).

The protein resides in the cell inner membrane. The enzyme catalyses L-methionine(out) + ATP + H2O = L-methionine(in) + ADP + phosphate + H(+). It catalyses the reaction D-methionine(out) + ATP + H2O = D-methionine(in) + ADP + phosphate + H(+). Part of the ABC transporter complex MetNIQ involved in methionine import. Responsible for energy coupling to the transport system. The chain is Methionine import ATP-binding protein MetN from Cupriavidus metallidurans (strain ATCC 43123 / DSM 2839 / NBRC 102507 / CH34) (Ralstonia metallidurans).